The following is a 351-amino-acid chain: AT-hook motif nuclear-localized protein 10 (351 aa).

Positions 1 to 151 are disordered; that stretch reads MSGSETGLMA…RPPGSSSKRL (151 aa). Residues 23 to 37 are compositionally biased toward low complexity; sequence HQQQQHSQAQPQQSQ. Positions 60 to 77 are enriched in polar residues; sequence SPPQQYQPNSAGENSVLN. The short motif at 97 to 105 is the Bipartite nuclear localization signal element; sequence KKRRGRPRK. DNA-binding regions (a.T hook) lie at residues 97–109 and 138–149; these read KKRRGRPRKYGPD and KKRGRPPGSSSK. Positions 159-301 constitute a PPC domain; it reads TGIGFTPHVL…QMGLSSPVLP (143 aa). 2 stretches are compositionally biased toward polar residues: residues 310–325 and 334–351; these read MTPSSPQSRGTMSESS and IHQSTGGPYNNTINMPWK. The disordered stretch occupies residues 310-351; sequence MTPSSPQSRGTMSESSCGGGHGSPIHQSTGGPYNNTINMPWK.

The protein resides in the nucleus. Functionally, transcription factor that specifically binds AT-rich DNA sequences related to the nuclear matrix attachment regions (MARs). This is AT-hook motif nuclear-localized protein 10 from Arabidopsis thaliana (Mouse-ear cress).